The following is a 218-amino-acid chain: Ribosomal RNA small subunit methyltransferase J (218 aa).

S-adenosyl-L-methionine-binding positions include Arg55–Asp56, Glu71–Arg72, and Asp123.

It belongs to the methyltransferase superfamily. RsmJ family.

It localises to the cytoplasm. It catalyses the reaction guanosine(1516) in 16S rRNA + S-adenosyl-L-methionine = N(2)-methylguanosine(1516) in 16S rRNA + S-adenosyl-L-homocysteine + H(+). Functionally, specifically methylates the guanosine in position 1516 of 16S rRNA. This is Ribosomal RNA small subunit methyltransferase J from Rhodopseudomonas palustris (strain HaA2).